A 2542-amino-acid polypeptide reads, in one-letter code: Talin-2 (2542 aa).

In terms of domain architecture, FERM spans 88–406 (RPQKIRMLDG…GYIDIILKKK (319 aa)). Residues 312 to 406 (GVSFFLVKEK…GYIDIILKKK (95 aa)) are interaction with PIP5K1C. Phosphoserine is present on residues Ser428, Ser449, Ser623, and Ser1023. Tyr1665 carries the post-translational modification Phosphotyrosine. Thr1843 carries the post-translational modification Phosphothreonine. An I/LWEQ domain is found at 2294–2533 (TEWVDPEDPT…QIRQQQYKFL (240 aa)).

Interacts directly with PIP5K1C.

It localises to the cytoplasm. Its subcellular location is the cell junction. The protein resides in the focal adhesion. It is found in the synapse. The protein localises to the cell membrane. It localises to the cytoskeleton. Functionally, as a major component of focal adhesion plaques that links integrin to the actin cytoskeleton, may play an important role in cell adhesion. Recruits PIP5K1C to focal adhesion plaques and strongly activates its kinase activity. This is Talin-2 (TLN2) from Homo sapiens (Human).